The sequence spans 127 residues: Ribonuclease VapC6 (127 aa).

Positions 26 to 120 (EPQRAEFCRS…ERHLPDIRVR (95 aa)) constitute a PINc domain. Asp-86 contributes to the Mg(2+) binding site.

Belongs to the PINc/VapC protein family. It depends on Mg(2+) as a cofactor.

In terms of biological role, toxic component of a type II toxin-antitoxin (TA) system. An RNase. The cognate antitoxin is VapB6. This chain is Ribonuclease VapC6, found in Mycobacterium tuberculosis (strain CDC 1551 / Oshkosh).